The primary structure comprises 449 residues: MFS-type transporter hasB (449 aa).

A run of 12 helical transmembrane segments spans residues 44–64 (VAGSFLLQFCSFGYVNACGIF), 80–100 (ALAWITTLQIFLLFMFGPAVG), 112–132 (LPPFSIGAVFSVCMLSLCTKY), 135–155 (VMLAQGVAFGLAAAGLSLPAM), 168–188 (LAVGIVSAGSSLGGVIYPCML), 195–215 (VGFASAVRWTALMQGILLFIA), 255–275 (LPWGFFVLGCFFTMWGLFAPL), 296–316 (AIANAGSLVGRIVPGWVSDII), 322–342 (MCIVTSLSGVLVLAFWLPLEF), 346–366 (LAGIIVFALLFGFVSGGFVSL), 387–407 (GGFCLAIALGALTGLPIEGAI), and 415–435 (FTGLMCFAGATMILGGVCTGT).

It belongs to the major facilitator superfamily. Monocarboxylate porter (TC 2.A.1.13) family.

The protein localises to the membrane. In terms of biological role, MFS-type transporter; part of the gene cluster that mediates the biosynthesis of hexadehydro-astechrome (HAS), a tryptophan-derived iron(III)-complex that acts as a virulence factor in infected mice. Required for the production of HAS. This is MFS-type transporter hasB from Aspergillus fumigatus (strain CBS 144.89 / FGSC A1163 / CEA10) (Neosartorya fumigata).